The chain runs to 182 residues: Putative manganese efflux pump MntP 1 (182 aa).

The next 6 helical transmembrane spans lie at 4 to 24 (LLLL…GLGA), 42 to 62 (IFQG…IAFI), 63 to 83 (SAFD…KMIY), 103 to 123 (LILS…LHLI), 127 to 147 (VFLS…LGVL), and 162 to 182 (ILGG…HLFF).

The protein belongs to the MntP (TC 9.B.29) family.

It localises to the cell inner membrane. Probably functions as a manganese efflux pump. The polypeptide is Putative manganese efflux pump MntP 1 (Wolinella succinogenes (strain ATCC 29543 / DSM 1740 / CCUG 13145 / JCM 31913 / LMG 7466 / NCTC 11488 / FDC 602W) (Vibrio succinogenes)).